A 613-amino-acid chain; its full sequence is Pesticidal crystal-like protein Cry16Aa (613 aa).

This sequence belongs to the delta endotoxin family.

The protein localises to the secreted. In terms of biological role, toxin active on mosquito larvae of the species Aedes aegypti, Culex pipiens and Anopheles stephensi. The chain is Pesticidal crystal-like protein Cry16Aa (cry16Aa) from Paraclostridium bifermentans (Clostridium bifermentans).